The chain runs to 294 residues: tRNA dimethylallyltransferase (294 aa).

Residue 10-17 (GPTAVGKT) coordinates ATP. Residue 12–17 (TAVGKT) coordinates substrate. Residues 35–38 (DSQQ) are interaction with substrate tRNA.

The protein belongs to the IPP transferase family. As to quaternary structure, monomer. Mg(2+) serves as cofactor.

It catalyses the reaction adenosine(37) in tRNA + dimethylallyl diphosphate = N(6)-dimethylallyladenosine(37) in tRNA + diphosphate. In terms of biological role, catalyzes the transfer of a dimethylallyl group onto the adenine at position 37 in tRNAs that read codons beginning with uridine, leading to the formation of N6-(dimethylallyl)adenosine (i(6)A). The polypeptide is tRNA dimethylallyltransferase (Streptococcus pneumoniae (strain Hungary19A-6)).